Here is a 473-residue protein sequence, read N- to C-terminus: Serine palmitoyltransferase 1 (473 aa).

Residues 1-15 (MATATEQWVLVEMVQ) are Lumenal-facing. The interaction with SPTLC2 stretch occupies residues 1-66 (MATATEQWVL…KEELIEEWQP (66 aa)). The helical transmembrane segment at 16 to 36 (ALYEAPAYHLILEGILILWII) threads the bilayer. The Cytoplasmic portion of the chain corresponds to 37–473 (RLLFSKTYKL…IKEVAQAVLL (437 aa)). Position 164 is a phosphotyrosine; by ABL (Tyr164).

This sequence belongs to the class-II pyridoxal-phosphate-dependent aminotransferase family. In terms of assembly, component of the serine palmitoyltransferase (SPT) complex, which is also composed of SPTLC2 or SPTLC3 and SPTSSA or SPTSSB. The heterodimer with SPTLC2 or SPTLC3 forms the catalytic core of the enzyme, while SPTSSA or SPTSSB subunits determine substrate specificity. SPT also interacts with ORMDL proteins, especially ORMDL3, which negatively regulate SPT activity in the presence of ceramides. Forms dimers of heterodimers with SPTLC2. Interacts with RTN4. Pyridoxal 5'-phosphate serves as cofactor. In terms of processing, phosphorylation at Tyr-164 inhibits activity and promotes cell survival.

The protein localises to the endoplasmic reticulum membrane. It catalyses the reaction L-serine + hexadecanoyl-CoA + H(+) = 3-oxosphinganine + CO2 + CoA. The catalysed reaction is octadecanoyl-CoA + L-serine + H(+) = 3-oxoeicosasphinganine + CO2 + CoA. It carries out the reaction tetradecanoyl-CoA + L-serine + H(+) = 3-oxohexadecasphinganine + CO2 + CoA. The enzyme catalyses dodecanoyl-CoA + L-serine + H(+) = 3-oxotetradecasphinganine + CO2 + CoA. Its pathway is lipid metabolism; sphingolipid metabolism. SPT complex catalytic activity is negatively regulated by ORMDL proteins, including ORMDL3, in the presence of ceramides. This mechanism allows to maintain ceramide levels at sufficient concentrations for the production of complex sphingolipids, but which prevents the accumulation of ceramides to levels that trigger apoptosis. Its function is as follows. Component of the serine palmitoyltransferase multisubunit enzyme (SPT) that catalyzes the initial and rate-limiting step in sphingolipid biosynthesis by condensing L-serine and activated acyl-CoA (most commonly palmitoyl-CoA) to form long-chain bases. The SPT complex is also composed of SPTLC2 or SPTLC3 and SPTSSA or SPTSSB. Within this complex, the heterodimer with SPTLC2 or SPTLC3 forms the catalytic core. The composition of the serine palmitoyltransferase (SPT) complex determines the substrate preference. The SPTLC1-SPTLC2-SPTSSA complex shows a strong preference for C16-CoA substrate, while the SPTLC1-SPTLC3-SPTSSA isozyme uses both C14-CoA and C16-CoA as substrates, with a slight preference for C14-CoA. The SPTLC1-SPTLC2-SPTSSB complex shows a strong preference for C18-CoA substrate, while the SPTLC1-SPTLC3-SPTSSB isozyme displays an ability to use a broader range of acyl-CoAs, without apparent preference. Required for adipocyte cell viability and metabolic homeostasis. This is Serine palmitoyltransferase 1 (SPTLC1) from Macaca fascicularis (Crab-eating macaque).